We begin with the raw amino-acid sequence, 179 residues long: Inner membrane-spanning protein YciB (179 aa).

6 consecutive transmembrane segments (helical) span residues 3–23, 24–44, 49–69, 76–96, 121–141, and 149–169; these read FLFD…ADIY, TATA…WFRH, PMQW…LVLH, WKPT…VIGW, AAWA…AYQF, and FKLF…SVWL.

Belongs to the YciB family.

It localises to the cell inner membrane. Its function is as follows. Plays a role in cell envelope biogenesis, maintenance of cell envelope integrity and membrane homeostasis. The protein is Inner membrane-spanning protein YciB of Cupriavidus necator (strain ATCC 17699 / DSM 428 / KCTC 22496 / NCIMB 10442 / H16 / Stanier 337) (Ralstonia eutropha).